The sequence spans 65 residues: U15-hexatoxin-Mg1b (65 aa).

Post-translationally, contains 4 disulfide bonds. As to expression, expressed by the venom gland.

It localises to the secreted. Its function is as follows. In vivo, intrathorax injection into crickets causes death. The polypeptide is U15-hexatoxin-Mg1b (Macrothele gigas (Japanese funnel web spider)).